The primary structure comprises 252 residues: Probable transcriptional regulatory protein Npun_R5651 (252 aa).

It belongs to the TACO1 family.

The protein localises to the cytoplasm. The chain is Probable transcriptional regulatory protein Npun_R5651 from Nostoc punctiforme (strain ATCC 29133 / PCC 73102).